A 402-amino-acid chain; its full sequence is N-acetyltransferase Eis (402 aa).

The region spanning 3 to 154 (VTLCSPTEDD…RFARFHADAP (152 aa)) is the N-acetyltransferase domain. Acetyl-CoA contacts are provided by residues 85–87 (VAV), 93–98 (RRGLLR), and 121–122 (SE). Tyrosine 126 serves as the catalytic Proton donor. Catalysis depends on phenylalanine 402, which acts as the Proton acceptor; via carboxylate.

The protein belongs to the acetyltransferase Eis family. In terms of assembly, homohexamer; trimer of dimers.

Its subcellular location is the secreted. The protein resides in the host cytoplasmic vesicle. It is found in the host phagosome. The protein localises to the extracellular vesicle. It localises to the bacterial extracellular vesicle. Its subcellular location is the host extracellular space. The enzyme catalyses L-lysyl-[protein] + acetyl-CoA = N(6)-acetyl-L-lysyl-[protein] + CoA + H(+). Its function is as follows. Effector that is released into the host cell and affects host immune responses. Acts as an acetyltransferase that acetylates lysine residues of host proteins. The polypeptide is N-acetyltransferase Eis (Mycobacterium bovis (strain BCG / Pasteur 1173P2)).